A 1058-amino-acid polypeptide reads, in one-letter code: MPKRTDIQKIMVIGSGPIIIGQAAEFDYAGTQACLSLKEEGYEVVLVNSNPATIMTDKEIADKVYIEPITLEFVTRILRKERPDALLPTLGGQTGLNMAMELSKNGILDELSVELLGTKLSAIDQAEDRDLFKQLMEELEQPIPESEIVNTVEEAVAFAATIGYPVIVRPAFTLGGTGGGMCANEKELREITENGLKLSPVTQCLIERSIAGFKEIEYEVMRDSADNALVVCNMENFDPVGIHTGDSIVFAPAQTMSDYENQMLRDASLSIIRALKIEGGCNVQLALDPNSFKYYVIEVNPRVSRSSALASKATGYPIAKLAAKIAVGLTLDEVINPVTGSTYAMFEPALDYVVAKIPRFPFDKFEKGERRLGTQMKATGEVMAIGRNIEESLLKACRSLEIGVHHNEIPELAAVSDDALIEKVVKAQDDRLFYVSEAIRRGYTPEEIAELTKIDIFYLDKLLHIFEIEQELGAHPQDLEVLKTAKLNGFSDRKIAELWGTTDDKVRQLRLENKIVPVYKMVDTCAAEFDSETPYFYSTYGWENESIRSDKESVLVLGSGPIRIGQGVEFDYATVHSVKAIQAAGYEAIIMNSNPETVSTDFSVSDKLYFEPLTFEDVMNVIDLEQPKGVIVQFGGQTAINLAEPLAKAGVTILGTQVADLDRAEDRDLFEQALKELDIPQPPGQTATNEEEAALAARKIGFPVLVRPSYVLGGRAMEIVENEEDLRSYMRTAVKASPDHPVLVDSYIVGQECEVDAISDGKDVLIPGIMEHIERAGVHSGDSMAVYPPQTLSQKVQETIADYTKRLAIGLHCLGMMNIQFVIKDEKVYVIEVNPRASRTVPFLSKVTNIPMAQVATKLILGQSLSELGYQNGLYPESTRVHIKAPVFSFTKLAKVDSLLGPEMKSTGEVMGSDATLEKALYKAFEASYLHLPTFGNVVFTIADDAKEEALNLARRFQNIGYGILATEGTAAFFASHGLQAQPVGKIGDDDKDIPSFVRKGRIQAIINTVGTKRTADEDGEQIRRSAIEHGVPLFTALDTANAMLKVLESRSFVTEAI.

Positions 1–401 are carboxyphosphate synthetic domain; that stretch reads MPKRTDIQKI…SLLKACRSLE (401 aa). Arg129, Arg169, Gly175, Gly176, Arg208, Ile210, Glu215, Gly241, Ile242, His243, Gln284, and Glu298 together coordinate ATP. The ATP-grasp 1 domain occupies 133 to 327; the sequence is KQLMEELEQP…IAKLAAKIAV (195 aa). The Mg(2+) site is built by Gln284, Glu298, and Asn300. Gln284, Glu298, and Asn300 together coordinate Mn(2+). The tract at residues 402 to 546 is oligomerization domain; that stretch reads IGVHHNEIPE…YSTYGWENES (145 aa). A carbamoyl phosphate synthetic domain region spans residues 547–929; it reads IRSDKESVLV…ALYKAFEASY (383 aa). The ATP-grasp 2 domain occupies 671–861; the sequence is EQALKELDIP…MAQVATKLIL (191 aa). Residues Arg707, Ser746, Ile748, Glu752, Gly777, Val778, His779, Ser780, Gln820, and Glu832 each coordinate ATP. Residues Gln820, Glu832, and Asn834 each contribute to the Mg(2+) site. Positions 820, 832, and 834 each coordinate Mn(2+). Residues 930–1058 enclose the MGS-like domain; it reads LHLPTFGNVV…ESRSFVTEAI (129 aa). The interval 930–1058 is allosteric domain; it reads LHLPTFGNVV…ESRSFVTEAI (129 aa).

It belongs to the CarB family. Composed of two chains; the small (or glutamine) chain promotes the hydrolysis of glutamine to ammonia, which is used by the large (or ammonia) chain to synthesize carbamoyl phosphate. Tetramer of heterodimers (alpha,beta)4. The cofactor is Mg(2+). It depends on Mn(2+) as a cofactor.

The catalysed reaction is hydrogencarbonate + L-glutamine + 2 ATP + H2O = carbamoyl phosphate + L-glutamate + 2 ADP + phosphate + 2 H(+). The enzyme catalyses hydrogencarbonate + NH4(+) + 2 ATP = carbamoyl phosphate + 2 ADP + phosphate + 2 H(+). It participates in amino-acid biosynthesis; L-arginine biosynthesis; carbamoyl phosphate from bicarbonate: step 1/1. It functions in the pathway pyrimidine metabolism; UMP biosynthesis via de novo pathway; (S)-dihydroorotate from bicarbonate: step 1/3. Large subunit of the glutamine-dependent carbamoyl phosphate synthetase (CPSase). CPSase catalyzes the formation of carbamoyl phosphate from the ammonia moiety of glutamine, carbonate, and phosphate donated by ATP, constituting the first step of 2 biosynthetic pathways, one leading to arginine and/or urea and the other to pyrimidine nucleotides. The large subunit (synthetase) binds the substrates ammonia (free or transferred from glutamine from the small subunit), hydrogencarbonate and ATP and carries out an ATP-coupled ligase reaction, activating hydrogencarbonate by forming carboxy phosphate which reacts with ammonia to form carbamoyl phosphate. The sequence is that of Carbamoyl phosphate synthase large chain from Streptococcus pneumoniae (strain P1031).